The primary structure comprises 375 residues: 23S rRNA (uracil(747)-C(5))-methyltransferase RlmC (375 aa).

Residues cysteine 3, cysteine 11, cysteine 14, and cysteine 87 each coordinate [4Fe-4S] cluster. Glutamine 212, phenylalanine 241, glutamate 262, and asparagine 307 together coordinate S-adenosyl-L-methionine. Cysteine 334 acts as the Nucleophile in catalysis.

Belongs to the class I-like SAM-binding methyltransferase superfamily. RNA M5U methyltransferase family. RlmC subfamily.

The enzyme catalyses uridine(747) in 23S rRNA + S-adenosyl-L-methionine = 5-methyluridine(747) in 23S rRNA + S-adenosyl-L-homocysteine + H(+). Catalyzes the formation of 5-methyl-uridine at position 747 (m5U747) in 23S rRNA. In Escherichia coli (strain SE11), this protein is 23S rRNA (uracil(747)-C(5))-methyltransferase RlmC.